The chain runs to 309 residues: MEFKDYYAILGVKPADDLKAIKTAYRRLARKYHPDVSTESNAEEQFKLVAEAYEVLKDDERRAEYDQLREHRNDPNFGRQTQHGSAHNAEDFSDIFSSMFGEHARGQQHRQRRQGMRGQDVEMEVAIFLEETQAEQTRTIRYSLPVYNAFGMVEQEIPKTLNVKIPAGVGDGERIRLKGQGGPGTDGGASGDLYLIIRIAPHPLFDIVGHNLEIVLPVAPWEAALGAKVPVPTLKDSILLTIPAGSQTGQRLRIKGKGLVGKKETGDLYAVIKVMMPPKPDEKSAALWQQLAEAQQSFDPRKDWSKQNG.

A J domain is found at 5–69 (DYYAILGVKP…ERRAEYDQLR (65 aa)).

The protein localises to the cytoplasm. Its subcellular location is the nucleoid. Its function is as follows. DNA-binding protein that preferentially recognizes a curved DNA sequence. It is probably a functional analog of DnaJ; displays overlapping activities with DnaJ, but functions under different conditions, probably acting as a molecular chaperone in an adaptive response to environmental stresses other than heat shock. Lacks autonomous chaperone activity; binds native substrates and targets them for recognition by DnaK. Its activity is inhibited by the binding of CbpM. This is Curved DNA-binding protein from Serratia proteamaculans (strain 568).